The sequence spans 141 residues: Large ribosomal subunit protein uL14 (141 aa).

It belongs to the universal ribosomal protein uL14 family. As to quaternary structure, part of the 50S ribosomal subunit. Forms a cluster with proteins L3 and L24e, part of which may contact the 16S rRNA in 2 intersubunit bridges.

In terms of biological role, binds to 23S rRNA. Forms part of two intersubunit bridges in the 70S ribosome. The protein is Large ribosomal subunit protein uL14 of Pyrococcus horikoshii (strain ATCC 700860 / DSM 12428 / JCM 9974 / NBRC 100139 / OT-3).